Reading from the N-terminus, the 453-residue chain is Probable glycine dehydrogenase (decarboxylating) subunit 1 (453 aa).

This sequence belongs to the GcvP family. N-terminal subunit subfamily. As to quaternary structure, the glycine cleavage system is composed of four proteins: P, T, L and H. In this organism, the P 'protein' is a heterodimer of two subunits.

It catalyses the reaction N(6)-[(R)-lipoyl]-L-lysyl-[glycine-cleavage complex H protein] + glycine + H(+) = N(6)-[(R)-S(8)-aminomethyldihydrolipoyl]-L-lysyl-[glycine-cleavage complex H protein] + CO2. In terms of biological role, the glycine cleavage system catalyzes the degradation of glycine. The P protein binds the alpha-amino group of glycine through its pyridoxal phosphate cofactor; CO(2) is released and the remaining methylamine moiety is then transferred to the lipoamide cofactor of the H protein. The chain is Probable glycine dehydrogenase (decarboxylating) subunit 1 from Erythrobacter litoralis (strain HTCC2594).